Reading from the N-terminus, the 249-residue chain is Undecaprenyl-diphosphatase (249 aa).

8 helical membrane-spanning segments follow: residues 11–31 (GLTE…TAIF), 35–55 (PDVG…LIFV), 80–100 (LVLS…FIES), 101–121 (VFSS…LMLL), 135–155 (IPYL…LPGI), 180–200 (FLMS…KVAF), 202–222 (TEQI…LYLV), and 226–246 (VIGG…FFVL).

This sequence belongs to the UppP family.

Its subcellular location is the cell membrane. The enzyme catalyses di-trans,octa-cis-undecaprenyl diphosphate + H2O = di-trans,octa-cis-undecaprenyl phosphate + phosphate + H(+). In terms of biological role, catalyzes the dephosphorylation of undecaprenyl diphosphate (UPP). This chain is Undecaprenyl-diphosphatase, found in Methanococcus maripaludis (strain C6 / ATCC BAA-1332).